The chain runs to 185 residues: Peptidyl-tRNA hydrolase (185 aa).

Position 14 (Tyr14) interacts with tRNA. His19 serves as the catalytic Proton acceptor. Residues Tyr65, Asn67, and Asn113 each coordinate tRNA.

The protein belongs to the PTH family. Monomer.

Its subcellular location is the cytoplasm. It carries out the reaction an N-acyl-L-alpha-aminoacyl-tRNA + H2O = an N-acyl-L-amino acid + a tRNA + H(+). In terms of biological role, hydrolyzes ribosome-free peptidyl-tRNAs (with 1 or more amino acids incorporated), which drop off the ribosome during protein synthesis, or as a result of ribosome stalling. Its function is as follows. Catalyzes the release of premature peptidyl moieties from peptidyl-tRNA molecules trapped in stalled 50S ribosomal subunits, and thus maintains levels of free tRNAs and 50S ribosomes. The sequence is that of Peptidyl-tRNA hydrolase from Rickettsia africae (strain ESF-5).